The chain runs to 314 residues: MSLLDWFAERRRQTSLNLTGSSPFDKERQVREIADGLWQKCPACDTLTYTKDLQQNWQVCPSCGHHHRITAPERLEQLLDPGSWQPLDEHLAPTDPLHFFDQKPYSERLATYQERTQLKDAVLTGLGSLEGIPVAIGVMDFRFMGGSMGSVVGEKIARLTERATCDHLPLILFSASGGARMQEGILSLMQMAKTSAALQRHRDARQLFISVLTHPTYGGVTASFAMLGDLILAEPGVQVGFAGPNVIEQTIGKGKLPEGFQTAEYLLAQGLIDAIVPRTELRKRLAQLLSMHRPRLHMSLPSIDSEALTLQPML.

Residues 37–307 form the CoA carboxyltransferase N-terminal domain; sequence LWQKCPACDT…MSLPSIDSEA (271 aa). Residues cysteine 41, cysteine 44, cysteine 60, and cysteine 63 each coordinate Zn(2+). The C4-type zinc finger occupies 41–63; that stretch reads CPACDTLTYTKDLQQNWQVCPSC.

The protein belongs to the AccD/PCCB family. As to quaternary structure, acetyl-CoA carboxylase is a heterohexamer composed of biotin carboxyl carrier protein (AccB), biotin carboxylase (AccC) and two subunits each of ACCase subunit alpha (AccA) and ACCase subunit beta (AccD). Zn(2+) serves as cofactor.

The protein localises to the cytoplasm. It carries out the reaction N(6)-carboxybiotinyl-L-lysyl-[protein] + acetyl-CoA = N(6)-biotinyl-L-lysyl-[protein] + malonyl-CoA. Its pathway is lipid metabolism; malonyl-CoA biosynthesis; malonyl-CoA from acetyl-CoA: step 1/1. Functionally, component of the acetyl coenzyme A carboxylase (ACC) complex. Biotin carboxylase (BC) catalyzes the carboxylation of biotin on its carrier protein (BCCP) and then the CO(2) group is transferred by the transcarboxylase to acetyl-CoA to form malonyl-CoA. This chain is Acetyl-coenzyme A carboxylase carboxyl transferase subunit beta, found in Synechococcus sp. (strain JA-2-3B'a(2-13)) (Cyanobacteria bacterium Yellowstone B-Prime).